The following is a 274-amino-acid chain: DNA repair protein Rad1 (274 aa).

The protein belongs to the rad1 family. As to quaternary structure, component of the 9-1-1 checkpoint clamp complex consisting of Rad9 isoform A, Rad1 and Hus1-like; the interaction with Hus1-like is direct. Does not interact directly with Rad9; this interaction is probably mediated by Hus1-like. This complex probably also forms with Rad9 isoform B, however 9-1-1 complex containing Rad9 isoform A localizes to the nuclear periphery. In terms of tissue distribution, expressed in ovary.

It localises to the cytoplasm. It is found in the nucleus. The protein resides in the nucleus envelope. The chain is DNA repair protein Rad1 from Drosophila melanogaster (Fruit fly).